The sequence spans 422 residues: UDP-N-acetylglucosamine 1-carboxyvinyltransferase (422 aa).

22 to 23 (KN) serves as a coordination point for phosphoenolpyruvate. R94 serves as a coordination point for UDP-N-acetyl-alpha-D-glucosamine. C118 acts as the Proton donor in catalysis. C118 is subject to 2-(S-cysteinyl)pyruvic acid O-phosphothioketal. Residues 123 to 127 (RPVDL), 163 to 166 (KVSV), D308, and I330 contribute to the UDP-N-acetyl-alpha-D-glucosamine site.

Belongs to the EPSP synthase family. MurA subfamily.

The protein localises to the cytoplasm. It catalyses the reaction phosphoenolpyruvate + UDP-N-acetyl-alpha-D-glucosamine = UDP-N-acetyl-3-O-(1-carboxyvinyl)-alpha-D-glucosamine + phosphate. The protein operates within cell wall biogenesis; peptidoglycan biosynthesis. In terms of biological role, cell wall formation. Adds enolpyruvyl to UDP-N-acetylglucosamine. This Yersinia enterocolitica serotype O:8 / biotype 1B (strain NCTC 13174 / 8081) protein is UDP-N-acetylglucosamine 1-carboxyvinyltransferase.